Reading from the N-terminus, the 183-residue chain is Threonylcarbamoyl-AMP synthase (183 aa).

Residues 1 to 183 enclose the YrdC-like domain; that stretch reads MELAQIVERL…IFSRQIFRRG (183 aa).

This sequence belongs to the SUA5 family. TsaC subfamily.

It localises to the cytoplasm. The catalysed reaction is L-threonine + hydrogencarbonate + ATP = L-threonylcarbamoyladenylate + diphosphate + H2O. Functionally, required for the formation of a threonylcarbamoyl group on adenosine at position 37 (t(6)A37) in tRNAs that read codons beginning with adenine. Catalyzes the conversion of L-threonine, HCO(3)(-)/CO(2) and ATP to give threonylcarbamoyl-AMP (TC-AMP) as the acyladenylate intermediate, with the release of diphosphate. This is Threonylcarbamoyl-AMP synthase from Mannheimia succiniciproducens (strain KCTC 0769BP / MBEL55E).